The chain runs to 273 residues: Dermonecrotic toxin LapSicTox-alphaIB1aiv (273 aa).

Histidine 5 is an active-site residue. Glutamate 25 and aspartate 27 together coordinate Mg(2+). Histidine 41 functions as the Nucleophile in the catalytic mechanism. 2 disulfide bridges follow: cysteine 45-cysteine 51 and cysteine 47-cysteine 190. Aspartate 85 contacts Mg(2+). An N-linked (GlcNAc...) asparagine glycan is attached at asparagine 250.

The protein belongs to the arthropod phospholipase D family. Class II subfamily. The cofactor is Mg(2+). In terms of tissue distribution, expressed by the venom gland.

The protein localises to the secreted. It catalyses the reaction an N-(acyl)-sphingosylphosphocholine = an N-(acyl)-sphingosyl-1,3-cyclic phosphate + choline. The catalysed reaction is an N-(acyl)-sphingosylphosphoethanolamine = an N-(acyl)-sphingosyl-1,3-cyclic phosphate + ethanolamine. The enzyme catalyses a 1-acyl-sn-glycero-3-phosphocholine = a 1-acyl-sn-glycero-2,3-cyclic phosphate + choline. It carries out the reaction a 1-acyl-sn-glycero-3-phosphoethanolamine = a 1-acyl-sn-glycero-2,3-cyclic phosphate + ethanolamine. Functionally, dermonecrotic toxins cleave the phosphodiester linkage between the phosphate and headgroup of certain phospholipids (sphingolipid and lysolipid substrates), forming an alcohol (often choline) and a cyclic phosphate. This toxin acts on sphingomyelin (SM). It may also act on ceramide phosphoethanolamine (CPE), lysophosphatidylcholine (LPC) and lysophosphatidylethanolamine (LPE), but not on lysophosphatidylserine (LPS), and lysophosphatidylglycerol (LPG). It acts by transphosphatidylation, releasing exclusively cyclic phosphate products as second products. Induces dermonecrosis, hemolysis, increased vascular permeability, edema, inflammatory response, and platelet aggregation. The protein is Dermonecrotic toxin LapSicTox-alphaIB1aiv of Loxosceles apachea (Apache recluse spider).